Consider the following 483-residue polypeptide: Protein FIZZY-RELATED 2 (483 aa).

The interval 1–28 (MEEEDPTASNVITNSNSSSMRNLSPAMN) is disordered. The span at 7-28 (TASNVITNSNSSSMRNLSPAMN) shows a compositional bias: polar residues. WD repeat units follow at residues 174–211 (QDDFYLNLVDWSAQNVLAVGLGNCVYLWNACSSKVTKL), 215–254 (GAEDSVCSVGWALRGTHLAVGTSTGKVQIWDASRCKRTRT), 257–294 (GHRLRVGALAWGSSVLSSGSRDKSILQRDIRCQEDHVS), 298–337 (GHKSEVCGLKWSYDNRELASGGNDNRLFVWNQHSTQPVLK), 340–382 (EHTA…HLSS), 384–425 (DTCS…KIAT), and 428–467 (GHTYRVLYLAVSPDGQTIVTGAGDETLRFWNVFPSPKSQN).

This sequence belongs to the WD repeat CDC20/Fizzy family. Associates with the APC/C complex. Interacts with CDC20-1, CDC20-2, CYCA1-1, CYCA1-2, CYCA3-4, CYCB1-1 and CYCB1-2. Binds to GIG1 and PYM. Expressed in seedlings, flowers, leaves and roots. Expressed in the differentiating cell files of the root elongation zone.

The protein localises to the nucleus. It participates in protein modification; protein ubiquitination. In terms of biological role, activator protein that regulates the ubiquitin ligase activity and substrate specificity of the anaphase promoting complex/cyclosome (APC/C). Necessary and sufficient for endoreduplication and correct cell expansion. Controls meristem size by stimulating endoreduplication in the elongation zone. The chain is Protein FIZZY-RELATED 2 (FZR2) from Arabidopsis thaliana (Mouse-ear cress).